The following is a 1049-amino-acid chain: Desmoglein-1 (1049 aa).

The first 23 residues, 1–23 (MDWSFFRVVAMLFIFLVVVEVNS), serve as a signal peptide directing secretion. The propeptide occupies 24–49 (EFRIQVRDYNTKNGTIKWHSIRRQKR). N-linked (GlcNAc...) asparagine glycosylation is found at Asn-36, Asn-110, and Asn-180. Cadherin domains follow at residues 50-158 (EWIK…PVFS), 159-270 (MATF…PYME), 271-385 (QSSY…GPVF), and 386-497 (RPGS…TEPN). The Extracellular portion of the chain corresponds to 50–548 (EWIKFAAACR…LLSDNVHFGP (499 aa)). A disordered region spans residues 485-534 (SFGNDDRTNTEPNTKITTNTGRQESTSSTNYDTSTTSTDSSQVYSSEPGN). Polar residues predominate over residues 494-508 (TEPNTKITTNTGRQE). Over residues 509-530 (STSSTNYDTSTTSTDSSQVYSS) the composition is skewed to low complexity. A helical transmembrane segment spans residues 549–569 (AGIGLLIMGFLVLGLVPFLMI). Residues 570–1049 (CCDCGGAPRS…TKYSTVQYSK (480 aa)) lie on the Cytoplasmic side of the membrane. Ser-579 carries the phosphoserine modification. 5 Desmoglein repeat repeats span residues 813–839 (TYPSGPGVLHPKPILDPLGYGNVTVTE), 840–869 (SYTTSDTLKPSVHVHDNRPASNVVVTERVV), 870–899 (GPISGADLHGMLEMPDLRDGSNVIVTERVI), 900–927 (APSSSLPTSLTIHHPRESSNVVVTERVI), and 928–956 (QPTSGMIGSLSMHPELANAHNVIVTERVV). A disordered region spans residues 1014 to 1035 (HMRSSSDHHFNQTIGSASPSTA). Positions 1024-1035 (NQTIGSASPSTA) are enriched in polar residues.

As to quaternary structure, binds to JUP/plakoglobin. Interacts with PKP2. Interacts with DSC3; there is evidence to suggest that the interaction promotes cell-cell adhesion of keratinocytes. (Microbial infection) Interacts with Staphylococcus aureus protein SdrD; this interaction increases S.aureus adherence to keratinocytes. Expressed in all suprabasal layers of the epidermis, with the highest expression seen in the granular layer (at protein level).

The protein resides in the cell membrane. Its subcellular location is the cell junction. It is found in the desmosome. The protein localises to the cytoplasm. It localises to the nucleus. Component of intercellular desmosome junctions. Involved in the interaction of plaque proteins and intermediate filaments mediating cell-cell adhesion. The polypeptide is Desmoglein-1 (DSG1) (Homo sapiens (Human)).